Consider the following 398-residue polypeptide: tRNA-specific 2-thiouridylase MnmA (398 aa).

Residues 18 to 25 (AMSGGVDS) and Leu-44 each bind ATP. Cys-112 acts as the Nucleophile in catalysis. A disulfide bond links Cys-112 and Cys-213. An ATP-binding site is contributed by Gly-136. Positions 163-165 (RDQ) are interaction with tRNA. The Cysteine persulfide intermediate role is filled by Cys-213.

Belongs to the MnmA/TRMU family.

The protein resides in the cytoplasm. The enzyme catalyses S-sulfanyl-L-cysteinyl-[protein] + uridine(34) in tRNA + AH2 + ATP = 2-thiouridine(34) in tRNA + L-cysteinyl-[protein] + A + AMP + diphosphate + H(+). Catalyzes the 2-thiolation of uridine at the wobble position (U34) of tRNA, leading to the formation of s(2)U34. The chain is tRNA-specific 2-thiouridylase MnmA from Agrobacterium fabrum (strain C58 / ATCC 33970) (Agrobacterium tumefaciens (strain C58)).